Reading from the N-terminus, the 352-residue chain is Zona pellucida-binding protein 2 (352 aa).

Residues 1–28 (MAGGGGRPCSPQRALLGMVAIMAVVAEA) form the signal peptide. 2 N-linked (GlcNAc...) asparagine glycosylation sites follow: Asn-110 and Asn-309.

This sequence belongs to the zona pellucida-binding protein Sp38 family.

The protein resides in the secreted. It is found in the cytoplasmic vesicle. It localises to the secretory vesicle. Its subcellular location is the acrosome. Functionally, may be implicated in the gamete interaction during fertilization. The protein is Zona pellucida-binding protein 2 (ZPBP2) of Gallus gallus (Chicken).